Here is an 89-residue protein sequence, read N- to C-terminus: Protein YxiC (89 aa).

This chain is Protein YxiC (yxiC), found in Bacillus subtilis (strain 168).